Here is a 135-residue protein sequence, read N- to C-terminus: Transcription antitermination protein NusB (135 aa).

Belongs to the NusB family.

Involved in transcription antitermination. Required for transcription of ribosomal RNA (rRNA) genes. Binds specifically to the boxA antiterminator sequence of the ribosomal RNA (rrn) operons. The polypeptide is Transcription antitermination protein NusB (Clostridium perfringens (strain ATCC 13124 / DSM 756 / JCM 1290 / NCIMB 6125 / NCTC 8237 / Type A)).